Reading from the N-terminus, the 76-residue chain is Conotoxin MaIr332 (76 aa).

The N-terminal stretch at 1-21 (MKLTCVIVAVLFLTAWTFVTA) is a signal peptide. A propeptide spanning residues 22 to 48 (DDSGNGLENLFSKAHHEMKNPKDSKLN) is cleaved from the precursor. 3 disulfides stabilise this stretch: Cys-51/Cys-66, Cys-58/Cys-70, and Cys-65/Cys-75.

This sequence belongs to the conotoxin O1 superfamily. Expressed by the venom duct.

It localises to the secreted. The chain is Conotoxin MaIr332 from Conus marmoreus (Marble cone).